The chain runs to 797 residues: MKLLLYLFGVTFHSNTVVALELRECSHQLGMSNRKIRDEQISASSSFDLQSTGPQHARAHQESGSGAWCPKNQINSLSKEWLQISFSVDTVITSVETQGRFDDGRGMEYATAFKIQYWRPSLNAWASYKDDFELETIPANNDTEHAIRRHLDRAIIARRIRIVPVSNSTRTVCMRVEVFGCPFDDSLVFYNVDQGDLQSGISYHDFSYDGNLANSPHLTGGIGKLYDGEVGKNNVFVNHHKWVGWRRKRNGNVKLAFEFSELRNISGILIHTSNEFKKSAKAFSSATVLFSINGKDFSDTIVHFNNPEDTESEVPRWIRIPVNNRIAKVAKIRLNFGTDSDWLFISEVNFESNHTNIELLNDDVVIPDSVSYFSVTEHDDGTSMFAFIIFFFMFLIVAVIILTVLYRKREYRVKASSPSPNAKREILLTIDGNTIKHHVSPSTYQMARDNLQNALIEKMPMSPIISDYAEPDISVCSDVTANTPLLYGIDGPYDTQKRSNPLSSMVKYSDYGEVYCTTLPEIARDKLICVSRIGQGEFGEVDLCQLENRKVAVKKLHGISQADEFSFHREIRVLGSLKHPNVVEVVGVCTIQKPILCIMEYMENGDLKSYILKNPTIQTSQCISICTQLAAGLAYLESCNFVHRDIAARNCLVDGEGNVKIADFGMARSLYSQEYYKVEGKFVLPIRWMAWEALLLGKFSTASDVWGFGVTMWEIFSLCSEKPYSDMTDDDVVENLQSMSSTGSLKQVLSRPRMCPSKLYNEQILPCWNYESSRRPSFENVHLHLQSLVHTSPHIHF.

An N-terminal signal peptide occupies residues 1 to 19; sequence MKLLLYLFGVTFHSNTVVA. Residues 20 to 384 lie on the Extracellular side of the membrane; that stretch reads LELRECSHQL…VTEHDDGTSM (365 aa). Residues 25–181 form the F5/8 type C domain; that stretch reads CSHQLGMSNR…VCMRVEVFGC (157 aa). Cysteines 25 and 181 form a disulfide. A disordered region spans residues 46 to 66; it reads SFDLQSTGPQHARAHQESGSG. 4 N-linked (GlcNAc...) asparagine glycosylation sites follow: Asn-141, Asn-167, Asn-264, and Asn-353. The chain crosses the membrane as a helical span at residues 385-405; the sequence is FAFIIFFFMFLIVAVIILTVL. At 406-797 the chain is on the cytoplasmic side; that stretch reads YRKREYRVKA…LVHTSPHIHF (392 aa). The Protein kinase domain maps to 527–785; sequence LICVSRIGQG…PSFENVHLHL (259 aa). ATP-binding positions include 533–541 and Lys-554; that span reads IGQGEFGEV. The active-site Proton acceptor is Asp-645.

Belongs to the protein kinase superfamily. Tyr protein kinase family. Insulin receptor subfamily. Interacts with shc-1. Autophosphorylated on tyrosine residues. Post-translationally, N-glycosylation at Asn-141 is required for axon regeneration after injury but is dispensable for kinase activity and axon localization. As to expression, expressed in some neurons in head and tail, some motoneurons in ventral nerve cord, in PVP interneurons, seam cells, rectal gland cells, vulva cells and some non-neuronal cells in the tail. Expressed in D-type motor neurons.

Its subcellular location is the cell membrane. The protein localises to the cell projection. It localises to the axon. It is found in the perikaryon. The catalysed reaction is L-tyrosyl-[protein] + ATP = O-phospho-L-tyrosyl-[protein] + ADP + H(+). In terms of biological role, tyrosine-protein kinase receptor which, together with ddr-1, is involved in axon guidance to establish the tracts for the ventral and dorsal nerve cords during nervous system development. Acts upstream of the adapter shc-1, and the tyrosine kinase receptors svh-1 and svh-2 to regulate axon regeneration following injury in D-type motor neurons. May mediate axon regeneration in association with the collagen emb-9. This Caenorhabditis elegans protein is Discoidin domain-containing receptor tyrosine kinase B.